Consider the following 440-residue polypeptide: Chromosome partition protein MukF (440 aa).

A leucine-zipper region spans residues 208 to 236 (LSETSGTLRELQDTLEAAGDKLQANLLRI).

The protein belongs to the MukF family. Interacts, and probably forms a ternary complex, with MukE and MukB via its C-terminal region. The complex formation is stimulated by calcium or magnesium. It is required for an interaction between MukE and MukB.

It localises to the cytoplasm. The protein resides in the nucleoid. Involved in chromosome condensation, segregation and cell cycle progression. May participate in facilitating chromosome segregation by condensation DNA from both sides of a centrally located replisome during cell division. Not required for mini-F plasmid partitioning. Probably acts via its interaction with MukB and MukE. Overexpression results in anucleate cells. It has a calcium binding activity. This Escherichia coli (strain ATCC 8739 / DSM 1576 / NBRC 3972 / NCIMB 8545 / WDCM 00012 / Crooks) protein is Chromosome partition protein MukF.